Reading from the N-terminus, the 153-residue chain is Endoribonuclease YbeY (153 aa).

Zn(2+)-binding residues include His114, His118, and His124.

The protein belongs to the endoribonuclease YbeY family. Zn(2+) serves as cofactor.

The protein localises to the cytoplasm. Functionally, single strand-specific metallo-endoribonuclease involved in late-stage 70S ribosome quality control and in maturation of the 3' terminus of the 16S rRNA. The polypeptide is Endoribonuclease YbeY (Nitrosococcus oceani (strain ATCC 19707 / BCRC 17464 / JCM 30415 / NCIMB 11848 / C-107)).